We begin with the raw amino-acid sequence, 418 residues long: Tyrosine--tRNA ligase (418 aa).

Tyr-34 is a binding site for L-tyrosine. The 'HIGH' region motif lies at 39–48 (PTADSLHLGH). L-tyrosine contacts are provided by Tyr-169 and Gln-173. The 'KMSKS' region signature appears at 229-233 (KFGKS). Lys-232 contacts ATP. One can recognise an S4 RNA-binding domain in the interval 352-418 (NNIVELLVSS…GKKKYFVLTY (67 aa)).

The protein belongs to the class-I aminoacyl-tRNA synthetase family. TyrS type 1 subfamily. Homodimer.

It localises to the cytoplasm. It catalyses the reaction tRNA(Tyr) + L-tyrosine + ATP = L-tyrosyl-tRNA(Tyr) + AMP + diphosphate + H(+). Functionally, catalyzes the attachment of tyrosine to tRNA(Tyr) in a two-step reaction: tyrosine is first activated by ATP to form Tyr-AMP and then transferred to the acceptor end of tRNA(Tyr). In Streptococcus pneumoniae (strain CGSP14), this protein is Tyrosine--tRNA ligase.